A 593-amino-acid chain; its full sequence is MAFRRTEGMSMIQALAMTVAEIPVFLYTTFGQSAFSQLRLTPGLRKVLFATALGTVALALAAHQLKRRRRKKKQVGPEMGGEHLGTVPLPILMARKVPSVKKGYSNRRVQSPSSKSNDTLSGISSIEPSKHSGSSHSLASMVVVNSSSPTAACSGPWETRGIEESVTTADGNAESLYMQGMELFEEALQKWEQALSVGQRGDSGSTPTPGDGLRNPETASEALSEPESQRKEFAEKLESLLHRAYHLQEEFGSTFPADSMLLDLERTLMLPLTEGSLRLRADDGDSLTSEDSFFSATELFESLQVGDYPIPLSRPAAAYEEALQLVKEGKVPCRTLRTELLGCYSDQDFLAKLHCVRQAFEGLLEDKSHQLFFGEVGRQMVTGLMTKAEKSPKGFLESYEEMLSYALRPETWATTRLELEGRGVVCMSFFDIVLDFILMDAFEDLENPPSSVLAVLRNRWLSDSFKETALATACWSVLKAKRRLLMVPDGFISHFYSVSEHVSPVLAFGFLGPKPQLSEVCAFFKHQIVQYLTDMFDLDNVRYTSVPALAEDILQLSRRRSEILLGYLGVPAASSIGLNGVLPRENGPPEALQ.

The next 2 helical transmembrane spans lie at 11 to 31 (MIQA…TTFG) and 42 to 62 (PGLR…ALAA). Disordered stretches follow at residues 101–134 (KKGY…HSGS) and 195–228 (LSVG…EPES). Over residues 107–123 (RRVQSPSSKSNDTLSGI) the composition is skewed to polar residues. A compositionally biased stretch (low complexity) spans 124–134 (SSIEPSKHSGS). Position 132 is a phosphoserine (serine 132). Threonine 206 is modified (phosphothreonine). Serine 220, serine 224, and serine 228 each carry phosphoserine. A Phosphothreonine modification is found at threonine 273. Phosphoserine is present on residues serine 276 and serine 295. Positions 292–298 (SFFSATE) match the FFAT motif. A helical membrane pass occupies residues 563–583 (ILLGYLGVPAASSIGLNGVLP).

It belongs to the mitoguardin family. In terms of assembly, homodimer and heterodimer; forms heterodimers with MIGA1. Interacts with PLD6/MitoPLD. Interacts (via phosphorylated FFAT motif) with MOSPD2. Phosphorylation at Ser-295 of the FFAT motif activates interaction with MOSPD2.

It is found in the mitochondrion outer membrane. Functionally, regulator of mitochondrial fusion: acts by forming homo- and heterodimers at the mitochondrial outer membrane and facilitating the formation of PLD6/MitoPLD dimers. May act by regulating phospholipid metabolism via PLD6/MitoPLD. This chain is Mitoguardin 2, found in Bos taurus (Bovine).